The following is a 347-amino-acid chain: Methylthioribose-1-phosphate isomerase (347 aa).

Residues 46-48, R89, and Q196 contribute to the substrate site; that span reads RGA. The Proton donor role is filled by D237. A substrate-binding site is contributed by 247–248; it reads NK.

Belongs to the eIF-2B alpha/beta/delta subunits family. MtnA subfamily.

It catalyses the reaction 5-(methylsulfanyl)-alpha-D-ribose 1-phosphate = 5-(methylsulfanyl)-D-ribulose 1-phosphate. The protein operates within amino-acid biosynthesis; L-methionine biosynthesis via salvage pathway; L-methionine from S-methyl-5-thio-alpha-D-ribose 1-phosphate: step 1/6. Catalyzes the interconversion of methylthioribose-1-phosphate (MTR-1-P) into methylthioribulose-1-phosphate (MTRu-1-P). This Chloroflexus aurantiacus (strain ATCC 29366 / DSM 635 / J-10-fl) protein is Methylthioribose-1-phosphate isomerase.